The chain runs to 352 residues: MGNFGRVPVGIVGASGYGGVQLVRLLMDHPEIELVYLGGESSVGKSFASLYPHLAHAVKLSIEEVDPEVIARRCEVVFLSMPNGLACQIVPTLLEKGCKVLDLSADYRFRNLTTYTTWYGVERSDRTTADTAIYGLPELYRDRISEAQLVGCPGSYPTASLLALSPLLKQGLIVPETAIVDAKSGTSGGGREAKTYLLLAEADNSLAPYSVVRHRHTPEIEQICSDLAGHEVTVQFTPHLVPIVRGILATVYATLRDPGLVGDDLTTIYTAFYRNSPWVKVCESGIYPQTKWAAGSNLCYIGVEVDPRTGRVIVMSVIDNLIKGQAGQAIQCLNIMMGWDETLGLPKMGFYP.

Belongs to the NAGSA dehydrogenase family. Type 1 subfamily.

Its subcellular location is the cytoplasm. It catalyses the reaction N-acetyl-L-glutamate 5-semialdehyde + phosphate + NADP(+) = N-acetyl-L-glutamyl 5-phosphate + NADPH + H(+). The protein operates within amino-acid biosynthesis; L-arginine biosynthesis; N(2)-acetyl-L-ornithine from L-glutamate: step 3/4. Catalyzes the NADPH-dependent reduction of N-acetyl-5-glutamyl phosphate to yield N-acetyl-L-glutamate 5-semialdehyde. This is N-acetyl-gamma-glutamyl-phosphate reductase 1 from Nostoc sp. (strain PCC 7120 / SAG 25.82 / UTEX 2576).